The sequence spans 315 residues: Malate dehydrogenase (315 aa).

NAD(+)-binding positions include glycine 10 to glycine 15 and aspartate 34. Arginine 85 and arginine 91 together coordinate substrate. NAD(+)-binding positions include asparagine 98 and valine 121–asparagine 123. Residues asparagine 123 and arginine 154 each coordinate substrate. The active-site Proton acceptor is the histidine 178.

This sequence belongs to the LDH/MDH superfamily. MDH type 3 family.

The enzyme catalyses (S)-malate + NAD(+) = oxaloacetate + NADH + H(+). Catalyzes the reversible oxidation of malate to oxaloacetate. The protein is Malate dehydrogenase of Rhodopirellula baltica (strain DSM 10527 / NCIMB 13988 / SH1).